Here is a 506-residue protein sequence, read N- to C-terminus: Acrylate reductase flavoprotein subunit (506 aa).

Residues methionine 1–alanine 30 constitute a signal peptide (tat-type signal). The FAD site is built by alanine 54, glutamate 74, asparagine 82, glycine 87, and glycine 88. The Proton donor role is filled by arginine 333. FAD-binding residues include glutamate 473 and isoleucine 489.

This sequence belongs to the FAD-dependent oxidoreductase 2 family. FRD/SDH subfamily. In terms of assembly, the ArdAB flavocytochrome c is composed of a FAD-containing subunit (ArdA) and a heme c-containing subunit (ArdB). Requires FAD as cofactor. Post-translationally, predicted to be exported by the Tat system. The position of the signal peptide cleavage has not been experimentally proven.

The protein localises to the periplasm. With respect to regulation, methacrylate acts as a competitive inhibitor of the acrylate reductase activity and suppresses the reductase activity in dose-dependent manner. Its function is as follows. FAD-containing subunit of the ArdAB flavocytochrome c, which catalyzes the reduction of acrylate to propanoate and supports dimethylsulfoniopropionate-dependent anaerobic respiration. In vitro, can use the artificial electron donor methyl viologen. The natural electron donor is probably a low-potential cytochrome c. Also shows weak activity toward methacrylate in vitro (at a 22-fold lower rate) but cannot use other tested 2-enoates, including crotonic, fumaric, sorbic, urocanic, cinnamic, p-coumaric, caffeic or ferulic acids. The protein catalyzes a unidirectional reaction and cannot oxidize propanoate with phenazine metasulfate and dichlorophenolindophenol as electron acceptors. In Shewanella woodyi (strain ATCC 51908 / MS32), this protein is Acrylate reductase flavoprotein subunit.